The primary structure comprises 598 residues: Elongation factor 4 (598 aa).

Residues 2 to 184 form the tr-type G domain; that stretch reads KNIRNFSIIA…EIVAKIPAPE (183 aa). Residues 14-19 and 131-134 each bind GTP; these read DHGKST and NKID.

This sequence belongs to the TRAFAC class translation factor GTPase superfamily. Classic translation factor GTPase family. LepA subfamily.

The protein localises to the cell inner membrane. It catalyses the reaction GTP + H2O = GDP + phosphate + H(+). Its function is as follows. Required for accurate and efficient protein synthesis under certain stress conditions. May act as a fidelity factor of the translation reaction, by catalyzing a one-codon backward translocation of tRNAs on improperly translocated ribosomes. Back-translocation proceeds from a post-translocation (POST) complex to a pre-translocation (PRE) complex, thus giving elongation factor G a second chance to translocate the tRNAs correctly. Binds to ribosomes in a GTP-dependent manner. This Haemophilus influenzae (strain ATCC 51907 / DSM 11121 / KW20 / Rd) protein is Elongation factor 4.